A 179-amino-acid polypeptide reads, in one-letter code: MSEETKEEIKNEKVDEEVTEELTEEALEDIVEEEINELDEAQKLATEWENKFLRVSAEMQNVQRRGNEERLQLIKYRSQDLAKKILSSLDNLERALAVEGLTDDVKKGLEMVQESLISALKEEGVEEVSYESFDHNIHMAVQTVPADDEHPADSIVQVFQKGYQLHERLLRPAMVVVAQ.

Residues Met1–Glu20 are disordered.

It belongs to the GrpE family. As to quaternary structure, homodimer.

The protein resides in the cytoplasm. In terms of biological role, participates actively in the response to hyperosmotic and heat shock by preventing the aggregation of stress-denatured proteins, in association with DnaK and GrpE. It is the nucleotide exchange factor for DnaK and may function as a thermosensor. Unfolded proteins bind initially to DnaJ; upon interaction with the DnaJ-bound protein, DnaK hydrolyzes its bound ATP, resulting in the formation of a stable complex. GrpE releases ADP from DnaK; ATP binding to DnaK triggers the release of the substrate protein, thus completing the reaction cycle. Several rounds of ATP-dependent interactions between DnaJ, DnaK and GrpE are required for fully efficient folding. The polypeptide is Protein GrpE (Lactococcus lactis subsp. lactis (strain IL1403) (Streptococcus lactis)).